Reading from the N-terminus, the 301-residue chain is Glycine--tRNA ligase alpha subunit (301 aa).

The protein belongs to the class-II aminoacyl-tRNA synthetase family. Tetramer of two alpha and two beta subunits.

It is found in the cytoplasm. The enzyme catalyses tRNA(Gly) + glycine + ATP = glycyl-tRNA(Gly) + AMP + diphosphate. The sequence is that of Glycine--tRNA ligase alpha subunit from Glaesserella parasuis serovar 5 (strain SH0165) (Haemophilus parasuis).